The chain runs to 399 residues: tRNA-specific 2-thiouridylase MnmA (399 aa).

Residues 18–25 (AMSGGVDS) and Leu44 contribute to the ATP site. Cys112 (nucleophile) is an active-site residue. A disulfide bond links Cys112 and Cys213. ATP is bound at residue Gly136. The interval 163–165 (RDQ) is interaction with tRNA. The active-site Cysteine persulfide intermediate is the Cys213.

This sequence belongs to the MnmA/TRMU family.

The protein localises to the cytoplasm. The catalysed reaction is S-sulfanyl-L-cysteinyl-[protein] + uridine(34) in tRNA + AH2 + ATP = 2-thiouridine(34) in tRNA + L-cysteinyl-[protein] + A + AMP + diphosphate + H(+). In terms of biological role, catalyzes the 2-thiolation of uridine at the wobble position (U34) of tRNA, leading to the formation of s(2)U34. The sequence is that of tRNA-specific 2-thiouridylase MnmA from Rhizobium leguminosarum bv. trifolii (strain WSM2304).